The following is a 297-amino-acid chain: Putative thiosulfate sulfurtransferase SseA (297 aa).

2 consecutive Rhodanese domains span residues 31-138 and 168-286; these read GAPG…ETTL and ILGA…VPIV. Cysteine 245 acts as the Cysteine persulfide intermediate in catalysis. Arginine 250 contacts substrate.

The catalysed reaction is thiosulfate + hydrogen cyanide = thiocyanate + sulfite + 2 H(+). This chain is Putative thiosulfate sulfurtransferase SseA (sseA), found in Mycobacterium tuberculosis (strain CDC 1551 / Oshkosh).